Here is a 396-residue protein sequence, read N- to C-terminus: MSRPQRISVLGATGSIGLSTLDVVQRHPDRYEAFALTGFSRLAELEALCLRHRPVYAVVPEQAAAIALQGSLAAAGIRTRVLFGEQALCEVASAPEVDMVMAAIVGAAGLPSTLAAVEAGKRVLLANKEALVMSGALFMQAVKRSGAVLLPIDSEHNAIFQSLPRNYADGLERVGVRRILLTASGGPFRETPLEQLASVTPEQACAHPNWSMGRKISVDSASMMNKGLELIEACWLFDAQPSQVEVVIHPQSVIHSMVDYVDGSVIAQLGNPDMRTPISYAMAWPERIDSGVSPLDMFAVGRLDFQRPDEQRFPCLRLASQAAETGGSAPAMLNAANEVAVAAFLERRIRFSDIAVIIEDVLNREAVTAVESLDQVLAADRRARSVAGQWLTRHAG.

T13, G14, S15, I16, and N127 together coordinate NADPH. Position 128 (K128) interacts with 1-deoxy-D-xylulose 5-phosphate. E129 is an NADPH binding site. D153 contacts Mn(2+). S154, E155, S184, and H207 together coordinate 1-deoxy-D-xylulose 5-phosphate. Position 155 (E155) interacts with Mn(2+). G213 lines the NADPH pocket. Positions 220, 225, 226, and 229 each coordinate 1-deoxy-D-xylulose 5-phosphate. E229 is a binding site for Mn(2+).

The protein belongs to the DXR family. It depends on Mg(2+) as a cofactor. The cofactor is Mn(2+).

It catalyses the reaction 2-C-methyl-D-erythritol 4-phosphate + NADP(+) = 1-deoxy-D-xylulose 5-phosphate + NADPH + H(+). It participates in isoprenoid biosynthesis; isopentenyl diphosphate biosynthesis via DXP pathway; isopentenyl diphosphate from 1-deoxy-D-xylulose 5-phosphate: step 1/6. In terms of biological role, catalyzes the NADPH-dependent rearrangement and reduction of 1-deoxy-D-xylulose-5-phosphate (DXP) to 2-C-methyl-D-erythritol 4-phosphate (MEP). The sequence is that of 1-deoxy-D-xylulose 5-phosphate reductoisomerase from Pseudomonas aeruginosa (strain UCBPP-PA14).